The chain runs to 86 residues: Large ribosomal subunit protein bL31B (86 aa).

It belongs to the bacterial ribosomal protein bL31 family. Type B subfamily. Part of the 50S ribosomal subunit.

The protein is Large ribosomal subunit protein bL31B of Streptococcus agalactiae serotype III (strain NEM316).